We begin with the raw amino-acid sequence, 425 residues long: Inhibin beta A chain (425 aa).

Residues Met1 to Ser20 form the signal peptide. Positions Ser21–Arg309 are excised as a propeptide. Asn165 carries N-linked (GlcNAc...) asparagine glycosylation. Residues Lys260–Arg289 are disordered. The segment covering Lys263–Glu275 has biased composition (basic and acidic residues). Disulfide bonds link Cys313/Cys321, Cys320/Cys390, Cys349/Cys422, and Cys353/Cys424.

The protein belongs to the TGF-beta family. As to quaternary structure, dimeric, linked by one or more disulfide bonds. Inhibin A is a dimer of alpha/INHA and beta-A/INHBA. Activin A is a homodimer of beta-A/INHBA. Activin AB is a dimer of beta-A/INHBA and beta-B/INHBB. Interacts with FST and FSTL3; these interactions prevent activin A interaction to its type II receptor. Activin A interacts with ACVR2A. Activin A interacts with BMPR2. Inhibin A interacts with ACVR1; this interaction creates a non-signaling complex (NSC) that inhibits ACVR1-mediated BMP signaling. Inhibin A interacts with ACVR2A.

It is found in the secreted. Inhibins/activins are involved in regulating a number of diverse functions such as hypothalamic and pituitary hormone secretion, gonadal hormone secretion, germ cell development and maturation, erythroid differentiation, insulin secretion, nerve cell survival, embryonic axial development or bone growth, depending on their subunit composition. Functionally, activin A is a homodimer of INHBA that plays a role in several essential biological processes including embryonic development, stem cell maintenance and differentiation, haematopoiesis, cell proliferation and tissue fibrosis. Signals through type I (such as ACVR1B or ACVR1C) and type II receptors (such as ACVR2A, ACVR2B or BMPR2) which, upon ligand binding, phosphorylate SMAD2 and SMAD3 intracellular signaling mediators that form a complex with SMAD4, translocate to the nucleus and modulate gene expression. Can also activate alternative non-canonical intracellular signaling pathways including the p38 MAPK, extracellular signal-regulated kinases 1/2 (ERK1/2) and c-Jun N-terminal kinases (JNKs) to modulate cell migration and differentiation. Alternatively, promotes osteoblastic differentiation via ACVRL1-SMAD1/5/9 pathway. In addition, can engage the type I receptor ACVR1 to form an ACVR1-activin A-type II receptor non-signaling complex (NSC) that renders receptors unavailable for engagement with BMPs, hence resulting in an apparent inhibition of ACVR1-mediated BMP signaling. In terms of biological role, inhibin A is a dimer of alpha/INHA and beta-A/INHBA that functions as a feedback regulator in the hypothalamic-pituitary-gonadal (HPG) axis. Inhibits the secretion of FSH from the anterior pituitary gland by acting on pituitary gonadotrope cells. Antagonizes activin A by binding to the proteoglycan, betaglycan, and forming a stable complex with and, thereby, sequestering type II activin receptors while excluding type I receptor. In Ovis aries (Sheep), this protein is Inhibin beta A chain (INHBA).